A 301-amino-acid chain; its full sequence is UDP-N-acetylenolpyruvoylglucosamine reductase 1 (301 aa).

The FAD-binding PCMH-type domain occupies 29 to 196; sequence KIGGPADILI…LEAEFQLQIG (168 aa). The active site involves R174. Residue S225 is the Proton donor of the active site. E295 is a catalytic residue.

The protein belongs to the MurB family. It depends on FAD as a cofactor.

It is found in the cytoplasm. It catalyses the reaction UDP-N-acetyl-alpha-D-muramate + NADP(+) = UDP-N-acetyl-3-O-(1-carboxyvinyl)-alpha-D-glucosamine + NADPH + H(+). Its pathway is cell wall biogenesis; peptidoglycan biosynthesis. Its function is as follows. Cell wall formation. The protein is UDP-N-acetylenolpyruvoylglucosamine reductase 1 (murB1) of Bacillus anthracis.